Here is a 476-residue protein sequence, read N- to C-terminus: Aspartyl/glutamyl-tRNA(Asn/Gln) amidotransferase subunit B (476 aa).

It belongs to the GatB/GatE family. GatB subfamily. As to quaternary structure, heterotrimer of A, B and C subunits.

It catalyses the reaction L-glutamyl-tRNA(Gln) + L-glutamine + ATP + H2O = L-glutaminyl-tRNA(Gln) + L-glutamate + ADP + phosphate + H(+). The enzyme catalyses L-aspartyl-tRNA(Asn) + L-glutamine + ATP + H2O = L-asparaginyl-tRNA(Asn) + L-glutamate + ADP + phosphate + 2 H(+). Functionally, allows the formation of correctly charged Asn-tRNA(Asn) or Gln-tRNA(Gln) through the transamidation of misacylated Asp-tRNA(Asn) or Glu-tRNA(Gln) in organisms which lack either or both of asparaginyl-tRNA or glutaminyl-tRNA synthetases. The reaction takes place in the presence of glutamine and ATP through an activated phospho-Asp-tRNA(Asn) or phospho-Glu-tRNA(Gln). This chain is Aspartyl/glutamyl-tRNA(Asn/Gln) amidotransferase subunit B, found in Lacticaseibacillus casei (strain BL23) (Lactobacillus casei).